Here is a 375-residue protein sequence, read N- to C-terminus: Alanine racemase (375 aa).

The active-site Proton acceptor; specific for D-alanine is lysine 45. Lysine 45 bears the N6-(pyridoxal phosphate)lysine mark. Arginine 141 lines the substrate pocket. Tyrosine 270 functions as the Proton acceptor; specific for L-alanine in the catalytic mechanism. Methionine 318 contacts substrate.

This sequence belongs to the alanine racemase family. The cofactor is pyridoxal 5'-phosphate.

The enzyme catalyses L-alanine = D-alanine. The protein operates within amino-acid biosynthesis; D-alanine biosynthesis; D-alanine from L-alanine: step 1/1. Its function is as follows. Catalyzes the interconversion of L-alanine and D-alanine. May also act on other amino acids. The polypeptide is Alanine racemase (alr) (Pseudoalteromonas atlantica (strain T6c / ATCC BAA-1087)).